The primary structure comprises 339 residues: 4-hydroxy-2-oxovalerate aldolase 3 (339 aa).

The 253-residue stretch at 7 to 259 folds into the Pyruvate carboxyltransferase domain; that stretch reads IRVTDTSLRD…KTGIDFFAIA (253 aa). A substrate-binding site is contributed by 15-16; it reads RD. D16 serves as a coordination point for Mn(2+). The Proton acceptor role is filled by H19. Positions 169 and 198 each coordinate substrate. Positions 198 and 200 each coordinate Mn(2+). Substrate is bound at residue Y289.

The protein belongs to the 4-hydroxy-2-oxovalerate aldolase family.

The enzyme catalyses (S)-4-hydroxy-2-oxopentanoate = acetaldehyde + pyruvate. The chain is 4-hydroxy-2-oxovalerate aldolase 3 from Rhodococcus opacus (strain B4).